The sequence spans 417 residues: Tyrosine--tRNA ligase (417 aa).

Residue Y39 participates in L-tyrosine binding. Positions A44 to N53 match the 'HIGH' region motif. Y176 and Q180 together coordinate L-tyrosine. A 'KMSKS' region motif is present at residues K236–S240. Position 239 (K239) interacts with ATP. In terms of domain architecture, S4 RNA-binding spans I350 to P416.

Belongs to the class-I aminoacyl-tRNA synthetase family. TyrS type 1 subfamily. In terms of assembly, homodimer.

The protein resides in the cytoplasm. The catalysed reaction is tRNA(Tyr) + L-tyrosine + ATP = L-tyrosyl-tRNA(Tyr) + AMP + diphosphate + H(+). Its function is as follows. Catalyzes the attachment of tyrosine to tRNA(Tyr) in a two-step reaction: tyrosine is first activated by ATP to form Tyr-AMP and then transferred to the acceptor end of tRNA(Tyr). The polypeptide is Tyrosine--tRNA ligase (Mesorhizobium japonicum (strain LMG 29417 / CECT 9101 / MAFF 303099) (Mesorhizobium loti (strain MAFF 303099))).